Consider the following 285-residue polypeptide: MAAFATKQSPLLLASLLILIGVATGSFYDSFDITWGAGRANIFESGQLLTCTLDKTSGSGFQSKKEYLFGKIDMKIKLVPGNSAGTVTAYYLSSKGETWDEIDFEFLGNVTGQPYVIHTNVFTGGKGNREMQFYLWFDPTADFHTYTVLWNPLNIIFLVDGIPIRVFKNNEANGVAYPKSQPMKIYSSLWEADDWATQGGKVKTDWTNAPFSASYRSFNDVDCCSRTSIWNWVTCNANSNSWMWTTLNSNQLGQLKWVQKDYMIYNYCTDFKRFPQGLPTECNLN.

The N-terminal stretch at methionine 1–glycine 25 is a signal peptide. Positions serine 26–tyrosine 215 constitute a GH16 domain. Glutamate 101 functions as the Nucleophile in the catalytic mechanism. Residue glutamate 105 is the Proton donor of the active site. Glutamate 105 contacts xyloglucan. Residue asparagine 109 is glycosylated (N-linked (GlcNAc...) asparagine). Residues histidine 118–asparagine 120, asparagine 128–glutamate 130, aspartate 194–tryptophan 195, and glycine 199 each bind xyloglucan. Intrachain disulfides connect cysteine 224/cysteine 235 and cysteine 268/cysteine 282. Residue arginine 273 participates in xyloglucan binding.

It belongs to the glycosyl hydrolase 16 family. XTH group 2 subfamily. Post-translationally, contains at least one intrachain disulfide bond essential for its enzymatic activity. As to expression, root specific.

The protein resides in the secreted. Its subcellular location is the cell wall. It is found in the extracellular space. It localises to the apoplast. The enzyme catalyses breaks a beta-(1-&gt;4) bond in the backbone of a xyloglucan and transfers the xyloglucanyl segment on to O-4 of the non-reducing terminal glucose residue of an acceptor, which can be a xyloglucan or an oligosaccharide of xyloglucan.. Functionally, catalyzes xyloglucan endohydrolysis (XEH) and/or endotransglycosylation (XET). Cleaves and religates xyloglucan polymers, an essential constituent of the primary cell wall, and thereby participates in cell wall construction of growing tissues. The sequence is that of Probable xyloglucan endotransglucosylase/hydrolase protein 12 (XTH12) from Arabidopsis thaliana (Mouse-ear cress).